Consider the following 416-residue polypeptide: MTTQTFRSDFLRTLHERGYIHQCSDLERLDAKAAEGPITAYIGFDATASSLHAGHLLSIMMLRTLQRTGHNPIALMGGGTTKIGDPSGKDEARKMLTDQQIEDNIASIRKVFARFLDFGAGAKMENNASWLDELKYIPLLREVGPHFTINRMLTFDSVKLRLEREQPLTFLEFNYMILQAYDFVELNARHGCILQMGGSDQWGNIVNGMELGRRMRGADLFALTTPLLTTSSGAKMGKTAGGAVWLDADLLSPYEYWQYWRNAGDADVERFLKLFTELPLDEIARLAALEGQEINHAKEVLATEATALLHGREAAEKAKETSRATFADGALAVDLPTVEVPRATLEAGLPVAKAFVDAGLVASTSEARRQIKGGGLKVNDVTVTDEKAVIDLGALTPEGVVKLSLGKKKHVLLKPV.

Tyr-41 serves as a coordination point for L-tyrosine. A 'HIGH' region motif is present at residues 46–55 (ATASSLHAGH). L-tyrosine contacts are provided by Tyr-175 and Gln-179. A 'KMSKS' region motif is present at residues 235–239 (KMGKT). Lys-238 contacts ATP. The region spanning 349-416 (LPVAKAFVDA…KKKHVLLKPV (68 aa)) is the S4 RNA-binding domain.

Belongs to the class-I aminoacyl-tRNA synthetase family. TyrS type 1 subfamily. Homodimer.

The protein localises to the cytoplasm. It catalyses the reaction tRNA(Tyr) + L-tyrosine + ATP = L-tyrosyl-tRNA(Tyr) + AMP + diphosphate + H(+). Its function is as follows. Catalyzes the attachment of tyrosine to tRNA(Tyr) in a two-step reaction: tyrosine is first activated by ATP to form Tyr-AMP and then transferred to the acceptor end of tRNA(Tyr). The sequence is that of Tyrosine--tRNA ligase from Xanthobacter autotrophicus (strain ATCC BAA-1158 / Py2).